The chain runs to 1469 residues: Chromosome condensation protein dpy-27 (1469 aa).

The segment at 1–25 is disordered; it reads MQPFKRRALTSDDDRPYADTDSMPE. Positions 9-18 are enriched in basic and acidic residues; that stretch reads LTSDDDRPYA. 122 to 129 contacts ATP; it reads GPNGSGKS. Positions 356–542 form a coiled coil; sequence ELEENKDIML…KGTLQTMMAE (187 aa). Positions 621–736 constitute an SMC hinge domain; the sequence is PGFKGRLGDL…VDSLEEATRI (116 aa). The disordered stretch occupies residues 758–781; sequence GALTGGGKPTTGRIRNDNNPNMSG. Coiled-coil stretches lie at residues 805-974, 1016-1056, and 1159-1182; these read LKLQ…AQLE, AYQT…DIIE, and TSAKKFSDKLKAHREKLNELRMAR. The disordered stretch occupies residues 1404-1469; the sequence is LPEFNRFPPA…VQRRVRRSRH (66 aa). Residues 1439-1449 are compositionally biased toward acidic residues; sequence EEEDEEDELIE.

The protein belongs to the SMC family. SMC4 subfamily. As to quaternary structure, component of the dosage compensation complex, which contains the mix-1/SMC2 and dpy-27/SMC4 heterodimer, and three non SMC subunits that probably regulate the complex: dpy-26, capg-1 and dpy-28. Within the complex, interacts with dpy-28, mix-1, dpy-26 and capg-1. Interacts with dpy-21. Interacts with dpy-28; the interaction is required for dpy-28 protein stability and dpy-28 association with the X chromosome. Interacts with smcl-1.

Its subcellular location is the nucleus. It is found in the chromosome. Its function is as follows. Central component of the condensin I-like dosage compensation complex that associates specifically with hermaphrodite X chromosomes to reduce their gene transcription throughout development. Its strong similarity with the condensin subunit smc4 suggests that it may reduce the X-chromosome transcript level by condensing the chromatin structure during interphase. Involved in the recruitment of the dosage compensation proteins mix-1 and dpy-21 to the X chromosome. Might be involved in the reduction of histone H4 lysine 16 acetylation (H4K16ac) on dosage compensated X chromosomes. As a member of the dosage compensation complex, also binds to regulatory regions of the autosomal her-1 gene, required for male development, possibly contributing to its repression in hermaphrodites. Also plays a role in the regulation of growth and body fat metabolism downstream of the TOR complex 2 pathway. In Caenorhabditis elegans, this protein is Chromosome condensation protein dpy-27 (dpy-27).